Reading from the N-terminus, the 598-residue chain is Elongation factor 4 (598 aa).

Residues 2 to 184 (DHIRNFSIIA…AIVKRVPPPR (183 aa)) enclose the tr-type G domain. GTP-binding positions include 14–19 (DHGKST) and 131–134 (NKID).

It belongs to the TRAFAC class translation factor GTPase superfamily. Classic translation factor GTPase family. LepA subfamily.

It localises to the cell inner membrane. It catalyses the reaction GTP + H2O = GDP + phosphate + H(+). Its function is as follows. Required for accurate and efficient protein synthesis under certain stress conditions. May act as a fidelity factor of the translation reaction, by catalyzing a one-codon backward translocation of tRNAs on improperly translocated ribosomes. Back-translocation proceeds from a post-translocation (POST) complex to a pre-translocation (PRE) complex, thus giving elongation factor G a second chance to translocate the tRNAs correctly. Binds to ribosomes in a GTP-dependent manner. In Syntrophus aciditrophicus (strain SB), this protein is Elongation factor 4.